Consider the following 546-residue polypeptide: Casein kinase I homolog 2 (546 aa).

2 stretches are compositionally biased toward polar residues: residues 1–33 (MSQV…SNVR) and 44–55 (HVSSNLNHNTGN). Residues 1 to 67 (MSQVQSPLTA…ASYSGSQSRD (67 aa)) are disordered. Serine 2 bears the N-acetylserine mark. One can recognise a Protein kinase domain in the interval 76-360 (YKIGKKIGEG…ETADGQYDWM (285 aa)). ATP contacts are provided by residues 82–90 (IGEGSFGVL) and lysine 105. Residue aspartate 195 is the Proton acceptor of the active site. Disordered regions lie at residues 373 to 425 (NKKP…QAQA) and 443 to 546 (QQAN…LGCC). Low complexity predominate over residues 412 to 425 (QQQQQQQAQAQAQA). Basic and acidic residues predominate over residues 453-465 (DDSHYDEEREASK). At serine 455 the chain carries Phosphoserine. A Glycyl lysine isopeptide (Lys-Gly) (interchain with G-Cter in ubiquitin) cross-link involves residue lysine 465. The span at 475-496 (QQQTQQKYAQQQQKQMQQKSKQ) shows a compositional bias: low complexity. Residues 497-530 (FANTGANGQTNKYPYNAQPTANDEQNAKNAAQDR) show a composition bias toward polar residues. Low complexity predominate over residues 533-546 (NKSSKGFFSKLGCC). Residues cysteine 545 and cysteine 546 are each lipidated (S-palmitoyl cysteine).

Belongs to the protein kinase superfamily. CK1 Ser/Thr protein kinase family. Casein kinase I subfamily. In terms of processing, palmitoylated by AKR1, which is required for proper plasma membrane localization of YCK2.

It is found in the cell membrane. It catalyses the reaction L-seryl-[protein] + ATP = O-phospho-L-seryl-[protein] + ADP + H(+). The catalysed reaction is L-threonyl-[protein] + ATP = O-phospho-L-threonyl-[protein] + ADP + H(+). Casein kinases are operationally defined by their preferential utilization of acidic proteins such as caseins as substrates. The sequence is that of Casein kinase I homolog 2 (YCK2) from Saccharomyces cerevisiae (strain ATCC 204508 / S288c) (Baker's yeast).